A 246-amino-acid chain; its full sequence is Orotidine 5'-phosphate decarboxylase (246 aa).

Substrate-binding positions include Asp-18, Lys-39, 66–75, Thr-130, Arg-192, Gln-201, Gly-221, and Arg-222; that span reads DLKFHDIPAT. Lys-68 acts as the Proton donor in catalysis.

The protein belongs to the OMP decarboxylase family. Type 1 subfamily. Homodimer.

It carries out the reaction orotidine 5'-phosphate + H(+) = UMP + CO2. It participates in pyrimidine metabolism; UMP biosynthesis via de novo pathway; UMP from orotate: step 2/2. In terms of biological role, catalyzes the decarboxylation of orotidine 5'-monophosphate (OMP) to uridine 5'-monophosphate (UMP). This chain is Orotidine 5'-phosphate decarboxylase, found in Parasynechococcus marenigrum (strain WH8102).